A 252-amino-acid polypeptide reads, in one-letter code: Carbohydrate deacetylase (252 aa).

2 residues coordinate Mg(2+): His-59 and His-122.

Belongs to the YdjC deacetylase family. In terms of assembly, homodimer. Mg(2+) is required as a cofactor.

Its function is as follows. Probably catalyzes the deacetylation of acetylated carbohydrates an important step in the degradation of oligosaccharides. This Vibrio cholerae serotype O1 (strain ATCC 39541 / Classical Ogawa 395 / O395) protein is Carbohydrate deacetylase.